A 335-amino-acid chain; its full sequence is Acetyl-coenzyme A carboxylase carboxyl transferase subunit alpha (335 aa).

The region spanning 38-292 is the CoA carboxyltransferase C-terminal domain; that stretch reads TLEQKAEELR…ATALSEEIEN (255 aa).

It belongs to the AccA family. Acetyl-CoA carboxylase is a heterohexamer composed of biotin carboxyl carrier protein (AccB), biotin carboxylase (AccC) and two subunits each of ACCase subunit alpha (AccA) and ACCase subunit beta (AccD).

It is found in the cytoplasm. It carries out the reaction N(6)-carboxybiotinyl-L-lysyl-[protein] + acetyl-CoA = N(6)-biotinyl-L-lysyl-[protein] + malonyl-CoA. Its pathway is lipid metabolism; malonyl-CoA biosynthesis; malonyl-CoA from acetyl-CoA: step 1/1. Its function is as follows. Component of the acetyl coenzyme A carboxylase (ACC) complex. First, biotin carboxylase catalyzes the carboxylation of biotin on its carrier protein (BCCP) and then the CO(2) group is transferred by the carboxyltransferase to acetyl-CoA to form malonyl-CoA. The protein is Acetyl-coenzyme A carboxylase carboxyl transferase subunit alpha of Heliobacterium modesticaldum (strain ATCC 51547 / Ice1).